The following is a 375-amino-acid chain: Anhydro-N-acetylmuramic acid kinase (375 aa).

Position 12–19 (12–19) interacts with ATP; that stretch reads GTSMDGVD.

The protein belongs to the anhydro-N-acetylmuramic acid kinase family.

The catalysed reaction is 1,6-anhydro-N-acetyl-beta-muramate + ATP + H2O = N-acetyl-D-muramate 6-phosphate + ADP + H(+). Its pathway is amino-sugar metabolism; 1,6-anhydro-N-acetylmuramate degradation. It functions in the pathway cell wall biogenesis; peptidoglycan recycling. Catalyzes the specific phosphorylation of 1,6-anhydro-N-acetylmuramic acid (anhMurNAc) with the simultaneous cleavage of the 1,6-anhydro ring, generating MurNAc-6-P. Is required for the utilization of anhMurNAc either imported from the medium or derived from its own cell wall murein, and thus plays a role in cell wall recycling. This is Anhydro-N-acetylmuramic acid kinase from Photobacterium profundum (strain SS9).